The chain runs to 143 residues: MAAMDTGQRADPSNPGDKEGDLQGLWQELYQLQAKQKKLKREVEKHKLFEDYLIKVLEKIPEGCTGWEEPEEVLVEATVKHYGKLFTASQDTQKRLEAFCQMIQAVHRSLESLEEDHRALIASRSGCVSCRRSATASRSSGGS.

A disordered region spans residues 1–21 (MAAMDTGQRADPSNPGDKEGD).

This is an uncharacterized protein from Homo sapiens (Human).